A 418-amino-acid chain; its full sequence is UDP-N-acetylglucosamine 1-carboxyvinyltransferase (418 aa).

22–23 (KN) contributes to the phosphoenolpyruvate binding site. A UDP-N-acetyl-alpha-D-glucosamine-binding site is contributed by R92. Residue C116 is the Proton donor of the active site. A 2-(S-cysteinyl)pyruvic acid O-phosphothioketal modification is found at C116. UDP-N-acetyl-alpha-D-glucosamine is bound by residues D305 and V327.

Belongs to the EPSP synthase family. MurA subfamily.

Its subcellular location is the cytoplasm. It catalyses the reaction phosphoenolpyruvate + UDP-N-acetyl-alpha-D-glucosamine = UDP-N-acetyl-3-O-(1-carboxyvinyl)-alpha-D-glucosamine + phosphate. It participates in cell wall biogenesis; peptidoglycan biosynthesis. In terms of biological role, cell wall formation. Adds enolpyruvyl to UDP-N-acetylglucosamine. This Endomicrobium trichonymphae protein is UDP-N-acetylglucosamine 1-carboxyvinyltransferase.